We begin with the raw amino-acid sequence, 825 residues long: NT-3 growth factor receptor (825 aa).

An N-terminal signal peptide occupies residues Met-1–Ala-31. Intrachain disulfides connect Cys-32–Cys-38 and Cys-36–Cys-45. Topologically, residues Cys-32 to Thr-429 are extracellular. N-linked (GlcNAc...) asparagine glycans are attached at residues Asn-68, Asn-72, and Asn-79. 2 LRR repeats span residues Gly-104–Lys-125 and His-128–Thr-149. Residues Asn-133 and Asn-163 are each glycosylated (N-linked (GlcNAc...) asparagine). One can recognise an LRRCT domain in the interval Asn-160–Leu-209. Cystine bridges form between Cys-164-Cys-189 and Cys-166-Cys-207. N-linked (GlcNAc...) asparagine glycans are attached at residues Asn-203, Asn-218, Asn-232, Asn-259, Asn-267, Asn-272, and Asn-294. Ig-like C2-type domains lie at Pro-210–Thr-300 and Ser-309–Glu-382. Cys-231 and Cys-284 are oxidised to a cystine. Residues Cys-320 and Cys-362 are joined by a disulfide bond. Asn-375 and Asn-388 each carry an N-linked (GlcNAc...) asparagine glycan. Residues Phe-430–Ile-453 traverse the membrane as a helical segment. The Cytoplasmic segment spans residues Asn-454–Gly-825. Phosphotyrosine; by autocatalysis is present on Tyr-516. Residues Ile-538–Gly-814 form the Protein kinase domain. ATP is bound by residues Leu-544–Val-552 and Lys-572. The Proton acceptor role is filled by Asp-679. A phosphotyrosine; by autocatalysis mark is found at Tyr-705, Tyr-709, Tyr-710, and Tyr-820.

It belongs to the protein kinase superfamily. Tyr protein kinase family. Insulin receptor subfamily. As to quaternary structure, exists in a dynamic equilibrium between monomeric (low affinity) and dimeric (high affinity) structures. Binds SH2B2. Interacts with SQSTM1 and KIDINS220. Interacts with PTPRS. Interacts with MAPK8IP3/JIP3. Ligand-mediated auto-phosphorylation. In terms of tissue distribution, preferentially in the brain, low levels in the ovaries.

It is found in the membrane. The catalysed reaction is L-tyrosyl-[protein] + ATP = O-phospho-L-tyrosyl-[protein] + ADP + H(+). Its function is as follows. Receptor tyrosine kinase involved in nervous system and probably heart development. Upon binding of its ligand NTF3/neurotrophin-3, NTRK3 autophosphorylates and activates different signaling pathways, including the phosphatidylinositol 3-kinase/AKT and the MAPK pathways, that control cell survival and differentiation. The protein is NT-3 growth factor receptor (NTRK3) of Sus scrofa (Pig).